The sequence spans 551 residues: MFS efflux transporter aclA (551 aa).

The next 8 helical transmembrane spans lie at 26–46, 64–84, 93–113, 125–145, 154–174, 181–201, 220–240, and 251–271; these read WAVF…ITAI, VWIA…IGQI, PMII…GATS, GLGA…LVPL, IALS…GALV, WVFY…VLCL, WVGN…LVIG, and VLVP…FEAS. Residue Asn-286 is glycosylated (N-linked (GlcNAc...) asparagine). A run of 6 helical transmembrane segments spans residues 294–314, 327–347, 356–376, 385–405, 420–440, and 492–512; these read VLAF…TLFF, VDVI…GAIM, LHWA…TWDA, ILQC…LPAI, AYAF…AVVF, and LRTV…LVVV.

Belongs to the major facilitator superfamily.

It localises to the membrane. Its function is as follows. MFS efflux transporter; part of the gene cluster that mediates the biosynthesis of aspirochlorine (or antibiotic A30641), an unusual halogenated spiro compound with distinctive antifungal properties due to selective inhibition of protein biosynthesis, and which is also active against bacteria, viruses, and murine tumor cells. The sequence is that of MFS efflux transporter aclA from Aspergillus oryzae (strain ATCC 42149 / RIB 40) (Yellow koji mold).